The following is a 296-amino-acid chain: Probable lipid kinase YegS-like (296 aa).

The DAGKc domain occupies 1–130 (MPHTLLILNG…IDLAQVNGEH (130 aa)). Residues Thr-37, 63 to 69 (GDGTINE), and Thr-92 each bind ATP. Leu-212, Asp-215, and Leu-217 together coordinate Mg(2+). Glu-268 serves as the catalytic Proton acceptor.

This sequence belongs to the diacylglycerol/lipid kinase family. YegS lipid kinase subfamily. Mg(2+) is required as a cofactor. It depends on Ca(2+) as a cofactor.

The protein resides in the cytoplasm. In terms of biological role, probably phosphorylates lipids; the in vivo substrate is unknown. This Yersinia pestis bv. Antiqua (strain Angola) protein is Probable lipid kinase YegS-like.